The primary structure comprises 406 residues: MNSAGADEIGKLFVGGLDWSTTQETLRSYFSQYGEVVDCVIMKDKTTNQSRGFGFVKFKDPNCVGTVLASRPHTLDGRNIDPKPCTPRGMQPERTRPKEGWQKGPRSDSSKSNKIFVGGIPHNCGETELREYFKKFGVVTEVVMIYDAEKQRPRGFGFITFEDEQSVDQAVNMHFHDIMGKKVEVKRAEPRDSKNQAPGQPGASQWGSRVAPSAANGWAGQPPPTWQQGYGPQGMWVPAGQAIGGYGPPPAGRGAPPPPPPFTSYIVSTPPGGFPPPQGFPQGYGAPPQFSFGYGPPPPPPDQFAPPGVPPPPATPGAAPLAFPPPPSQAAPDMSKPPTAQPDFPYGQYGYGQDLSGFGQGFSDPSQQPPSYGGPSVPGSGGPPAGGSGFGRGQNHNVQGFHPYRR.

Met1 carries the N-acetylmethionine modification. 2 RRM domains span residues 10-97 (GKLF…RTRP) and 113-190 (NKIF…RAEP). The disordered stretch occupies residues 74–117 (TLDGRNIDPKPCTPRGMQPERTRPKEGWQKGPRSDSSKSNKIFV). Residues 91–111 (QPERTRPKEGWQKGPRSDSSK) show a composition bias toward basic and acidic residues. Lys150 carries the N6-acetyllysine modification. The segment at 186 to 406 (KRAEPRDSKN…NVQGFHPYRR (221 aa)) is disordered. Positions 195–207 (NQAPGQPGASQWG) are enriched in polar residues. Over residues 247–262 (GPPPAGRGAPPPPPPF) the composition is skewed to pro residues. Arg253 carries the post-translational modification Omega-N-methylarginine. A compositionally biased stretch (low complexity) spans 280–294 (FPQGYGAPPQFSFGY). The segment covering 295–315 (GPPPPPPDQFAPPGVPPPPAT) has biased composition (pro residues). Residues 363–378 (SDPSQQPPSYGGPSVP) are compositionally biased toward low complexity. Gly residues predominate over residues 379–392 (GSGGPPAGGSGFGR).

Interacts with DAZ and DAZL. Acetylation at Lys-150 is predominantly observed in the nuclear fraction, and may regulate nucleocytoplasmic transport. In terms of tissue distribution, mainly expressed in testis. Expressed at much lower level in liver, heart and brain. Also expressed in ovary. Expressed throughout testes development, in both the prenatal and postnatal periods.

It is found in the cytoplasm. The protein resides in the nucleus. Functionally, RNA-binding protein, which may be required during spermatogenesis. The polypeptide is DAZ-associated protein 1 (Dazap1) (Mus musculus (Mouse)).